The following is a 325-amino-acid chain: Bifunctional ligase/repressor BirA (325 aa).

Positions 23–42 (GQKISDALGCSRTAVWKHIE) form a DNA-binding region, H-T-H motif. In terms of domain architecture, BPL/LPL catalytic spans 74–262 (RFGLKTEVMG…CFEKRYRDYM (189 aa)). Residues Gln-118, 122–124 (RGR), and Lys-189 contribute to the biotin site.

Belongs to the biotin--protein ligase family.

It carries out the reaction biotin + L-lysyl-[protein] + ATP = N(6)-biotinyl-L-lysyl-[protein] + AMP + diphosphate + H(+). In terms of biological role, acts both as a biotin--[acetyl-CoA-carboxylase] ligase and a repressor. This is Bifunctional ligase/repressor BirA from Bacillus subtilis (strain 168).